The primary structure comprises 45 residues: Photosystem II reaction center protein K (45 aa).

The propeptide occupies 1 to 8 (MEAVFLLA). The chain crosses the membrane as a helical span at residues 24–44 (LPVIPVFFLALAFVWQAAVGF).

Belongs to the PsbK family. As to quaternary structure, PSII is composed of 1 copy each of membrane proteins PsbA, PsbB, PsbC, PsbD, PsbE, PsbF, PsbH, PsbI, PsbJ, PsbK, PsbL, PsbM, PsbT, PsbX, PsbY, PsbZ, Psb30/Ycf12, peripheral proteins PsbO, CyanoQ (PsbQ), PsbU, PsbV and a large number of cofactors. It forms dimeric complexes.

Its subcellular location is the cellular thylakoid membrane. One of the components of the core complex of photosystem II (PSII). PSII is a light-driven water:plastoquinone oxidoreductase that uses light energy to abstract electrons from H(2)O, generating O(2) and a proton gradient subsequently used for ATP formation. It consists of a core antenna complex that captures photons, and an electron transfer chain that converts photonic excitation into a charge separation. This Crocosphaera subtropica (strain ATCC 51142 / BH68) (Cyanothece sp. (strain ATCC 51142)) protein is Photosystem II reaction center protein K.